A 347-amino-acid chain; its full sequence is Uroporphyrinogen decarboxylase (347 aa).

Residues 23–27 (RQAGR), Asp73, Tyr150, Thr205, and His323 each bind substrate.

Belongs to the uroporphyrinogen decarboxylase family. Homodimer.

Its subcellular location is the cytoplasm. It carries out the reaction uroporphyrinogen III + 4 H(+) = coproporphyrinogen III + 4 CO2. The protein operates within porphyrin-containing compound metabolism; protoporphyrin-IX biosynthesis; coproporphyrinogen-III from 5-aminolevulinate: step 4/4. In terms of biological role, catalyzes the decarboxylation of four acetate groups of uroporphyrinogen-III to yield coproporphyrinogen-III. This Ruthia magnifica subsp. Calyptogena magnifica protein is Uroporphyrinogen decarboxylase.